Consider the following 551-residue polypeptide: Tetrachloroethene reductive dehalogenase (551 aa).

Positions 1–39 form a signal peptide, tat-type signal; it reads MGEINRRNFLKVSILGAAAAAVASASAVKGMVSPLVADA. In terms of domain architecture, 4Fe-4S ferredoxin-type 1 spans 411–440; that stretch reads PRKFGVREFCRLCKKCADACPAQAISHEKD. 8 residues coordinate [4Fe-4S] cluster: cysteine 420, cysteine 423, cysteine 426, cysteine 430, cysteine 467, cysteine 478, cysteine 481, and cysteine 485. The region spanning 478–496 is the 4Fe-4S ferredoxin-type 2 domain; it reads CSNCVAVCSWNKVETWNHD.

Belongs to the PceA family. Requires [4Fe-4S] cluster as cofactor. Corrinoid is required as a cofactor. Post-translationally, predicted to be exported by the Tat system. The position of the signal peptide cleavage has been experimentally proven.

Its subcellular location is the cytoplasm. The protein resides in the cell membrane. The protein localises to the secreted. It catalyses the reaction trichloroethene + chloride + A + H(+) = tetrachloroethene + AH2. The catalysed reaction is trichloroethene + AH2 = (Z)-1,2-dichloroethene + chloride + A + H(+). With respect to regulation, pceT is required as a chaperone for prePceA maturation. In the absence or presence of exogenous vitamin B12, the intracellular corrinoid level decreases in fumarate-grown cells and the PceA precursor forms catalytically inactive, corrinoid-free multiprotein aggregates. Exogenous vitamin B12 is not incorporated into the PceA precursor, even though it affects the transposition of the pce gene cluster. In terms of biological role, catalyzes the reductive dechlorination of tetrachloroethene (PCE) to trichloroethene (TCE) and of trichloroethene to cis-1,2-dichloroethene (DCE). Can also use various chlorinated ethanes such as tetrachloroethane, pentachloroethane and hexachloroethane. Reduced methyl viologen can act as the artificial electron donor. The polypeptide is Tetrachloroethene reductive dehalogenase (Desulfitobacterium hafniense (strain Y51)).